Consider the following 528-residue polypeptide: Lysine--tRNA ligase (528 aa).

Residues P44–T52 carry the 'HIGH' region motif. The short motif at K290–S294 is the 'KMSKS' region element. K293 contacts ATP.

The protein belongs to the class-I aminoacyl-tRNA synthetase family.

The protein resides in the cytoplasm. It carries out the reaction tRNA(Lys) + L-lysine + ATP = L-lysyl-tRNA(Lys) + AMP + diphosphate. The polypeptide is Lysine--tRNA ligase (lysS) (Rickettsia prowazekii (strain Madrid E)).